Consider the following 598-residue polypeptide: DNA ligase (598 aa).

Asp258 is an ATP binding site. Lys260 acts as the N6-AMP-lysine intermediate in catalysis. ATP is bound by residues Arg265, Arg280, Glu310, Phe350, Arg427, and Lys433.

It belongs to the ATP-dependent DNA ligase family. Mg(2+) serves as cofactor.

The enzyme catalyses ATP + (deoxyribonucleotide)n-3'-hydroxyl + 5'-phospho-(deoxyribonucleotide)m = (deoxyribonucleotide)n+m + AMP + diphosphate.. Its function is as follows. DNA ligase that seals nicks in double-stranded DNA during DNA replication, DNA recombination and DNA repair. The protein is DNA ligase of Sulfolobus acidocaldarius (strain ATCC 33909 / DSM 639 / JCM 8929 / NBRC 15157 / NCIMB 11770).